A 685-amino-acid chain; its full sequence is Translation initiation factor IF-2 (685 aa).

A disordered region spans residues 60-79 (ISLAKTREPSKEKTEAKKPP). Residues 64-79 (KTREPSKEKTEAKKPP) are compositionally biased toward basic and acidic residues. The 178-residue stretch at 175 to 352 (NRPPVVTVMG…DIRCIPDSPV (178 aa)) folds into the tr-type G domain. Positions 184–191 (GHVDHGKT) are G1. Residue 184–191 (GHVDHGKT) participates in GTP binding. The segment at 209-213 (GITQS) is G2. A G3 region spans residues 230-233 (DTPG). Residues 230–234 (DTPGH) and 284–287 (NKID) each bind GTP. Positions 284–287 (NKID) are G4. Residues 321–323 (SAR) form a G5 region.

Belongs to the TRAFAC class translation factor GTPase superfamily. Classic translation factor GTPase family. IF-2 subfamily.

Its subcellular location is the cytoplasm. In terms of biological role, one of the essential components for the initiation of protein synthesis. Protects formylmethionyl-tRNA from spontaneous hydrolysis and promotes its binding to the 30S ribosomal subunits. Also involved in the hydrolysis of GTP during the formation of the 70S ribosomal complex. The sequence is that of Translation initiation factor IF-2 from Fervidobacterium nodosum (strain ATCC 35602 / DSM 5306 / Rt17-B1).